The sequence spans 357 residues: Heat-inducible transcription repressor HrcA (357 aa).

The protein belongs to the HrcA family.

In terms of biological role, negative regulator of class I heat shock genes (grpE-dnaK-dnaJ and groELS operons). Prevents heat-shock induction of these operons. The sequence is that of Heat-inducible transcription repressor HrcA from Anabaena sp. (strain L31).